A 440-amino-acid polypeptide reads, in one-letter code: Suppressor of cytokine signaling 4 (440 aa).

Polar residues predominate over residues 1–10 (MAENNENISK). The interval 1 to 29 (MAENNENISKNVDVRPKTSRSRSADRKDG) is disordered. Residues 12 to 29 (VDVRPKTSRSRSADRKDG) are compositionally biased toward basic and acidic residues. Residues 286–381 (CYWGVMDKYA…FFEPLLSTPL (96 aa)) form the SH2 domain. Positions 376–425 (LLSTPLIRTFPFSLQHICRTVICNCTTYDGIDALPIPSSMKLYLKEYHYK) constitute an SOCS box domain.

The protein operates within protein modification; protein ubiquitination. In terms of biological role, SOCS family proteins form part of a classical negative feedback system that regulates cytokine signal transduction. Substrate-recognition component of a SCF-like ECS (Elongin BC-CUL2/5-SOCS-box protein) E3 ubiquitin-protein ligase complex which mediates the ubiquitination and subsequent proteasomal degradation of target proteins. Inhibits EGF signaling by mediating the degradation of the Tyr-phosphorylated EGF receptor/EGFR. The chain is Suppressor of cytokine signaling 4 (SOCS4) from Pongo abelii (Sumatran orangutan).